We begin with the raw amino-acid sequence, 313 residues long: Porphobilinogen deaminase (313 aa).

Cys-242 carries the post-translational modification S-(dipyrrolylmethanemethyl)cysteine.

It belongs to the HMBS family. In terms of assembly, monomer. It depends on dipyrromethane as a cofactor.

The enzyme catalyses 4 porphobilinogen + H2O = hydroxymethylbilane + 4 NH4(+). The protein operates within porphyrin-containing compound metabolism; protoporphyrin-IX biosynthesis; coproporphyrinogen-III from 5-aminolevulinate: step 2/4. In terms of biological role, tetrapolymerization of the monopyrrole PBG into the hydroxymethylbilane pre-uroporphyrinogen in several discrete steps. The protein is Porphobilinogen deaminase of Yersinia enterocolitica serotype O:8 / biotype 1B (strain NCTC 13174 / 8081).